A 337-amino-acid polypeptide reads, in one-letter code: Inositol 2-dehydrogenase 1 (337 aa).

This sequence belongs to the Gfo/Idh/MocA family. As to quaternary structure, homotetramer.

The enzyme catalyses myo-inositol + NAD(+) = scyllo-inosose + NADH + H(+). Its function is as follows. Involved in the oxidation of myo-inositol (MI) to 2-keto-myo-inositol (2KMI or 2-inosose). The sequence is that of Inositol 2-dehydrogenase 1 from Saccharopolyspora erythraea (strain ATCC 11635 / DSM 40517 / JCM 4748 / NBRC 13426 / NCIMB 8594 / NRRL 2338).